We begin with the raw amino-acid sequence, 243 residues long: MSIPLLYYPLSTQNQRVESFEILSNEEQSKIYTTDTLPSASEMDELIWAAYRQIFSEHQILKFTRQRFLESQLRFNQIKVREFIRGLAISDSFRKLNYDVNNNYRFVELCVQRILGRDVYNEKEKIAWSIVICNKGVIGFIDCLINSQEYLENFGDNIVPYQRRRIIFQRVNGETPFNLKTPRYGIEFRDKLVKPQFIWQGAIRRFRPQEQRPRAGDPVLFLNMVYDLNITPKFNRYPGLVNR.

Residues 11-191 (STQNQRVESF…PRYGIEFRDK (181 aa)) form the PBS-linker domain.

Belongs to the phycobilisome linker protein family. In terms of assembly, the phycobilisome is a hemidiscoidal structure that is composed of two distinct substructures: a core complex and a number of rods radiating from the core.

The protein localises to the plastid. Its subcellular location is the chloroplast thylakoid membrane. Rod-core linker protein required for attachment of phycocyanin to allophycocyanin in cores of phycobilisomes. Functionally, linker polypeptides determine the state of aggregation and the location of the disk-shaped phycobiliprotein units within the phycobilisome and modulate their spectroscopic properties in order to mediate a directed and optimal energy transfer. The chain is Phycobilisome rod-core linker polypeptide cpcG (cpcG) from Galdieria sulphuraria (Red alga).